The following is a 444-amino-acid chain: Adenine permease AdeQ (444 aa).

The Cytoplasmic portion of the chain corresponds to 1–29 (MNNDNTDYVSNESGTLSRLFKLPQHGTTV). A helical membrane pass occupies residues 30–53 (RTELIAGMTTFLTMVYIVFVNPQI). The Periplasmic portion of the chain corresponds to 54–63 (LGAAQMDPKV). The chain crosses the membrane as a helical span at residues 64-82 (VFVTTCLIAGIGSIAMGIF). At 83 to 84 (AN) the chain is on the cytoplasmic side. A discontinuously helical membrane pass occupies residues 85-101 (LPVALAPAMGLNAFFAF). Over 102 to 113 (VVVGAMGISWQT) the chain is Periplasmic. The chain crosses the membrane as a helical span at residues 114–133 (GMGAIFWGAVGLFLLTLFRI). Residues 134–145 (RYWMISNIPLSL) lie on the Cytoplasmic side of the membrane. A helical membrane pass occupies residues 146-166 (RIGITSGIGLFIALMGLKNTG). Topologically, residues 167–182 (VIVANKDTLVMIGDLS) are periplasmic. Residues 183–200 (SHGVLLGILGFFIITVLS) traverse the membrane as a helical segment. Residues 201 to 204 (SRHF) lie on the Cytoplasmic side of the membrane. A helical transmembrane segment spans residues 205 to 223 (HAAVLVSIVVTSCCGLFFG). Over 224 to 251 (DVHFSGVYSIPPDISGVIGEVDLSGALT) the chain is Periplasmic. The helical transmembrane segment at 252–280 (LELAGIIFSFMLINLFDSSGTLIGVTDKA) threads the bilayer. The Cytoplasmic segment spans residues 281–293 (GLIDGNGKFPNMN). A helical transmembrane segment spans residues 294 to 309 (KALYVDSVSSVAGAFI). At 310–311 (GT) the chain is on the periplasmic side. Residues 312 to 327 (SSVTAYIESTSGVAVG) form a discontinuously helical membrane-spanning segment. The Cytoplasmic portion of the chain corresponds to 328–331 (GRTG). Residues 332-346 (LTAVVVGVMFLLVMF) form a helical membrane-spanning segment. Residues 347 to 357 (FSPLVAIVPPY) lie on the Periplasmic side of the membrane. The helical transmembrane segment at 358–377 (ATAGALIFVGVLMTSSLARV) threads the bilayer. The Cytoplasmic segment spans residues 378–382 (NWDDF). Residues 383–418 (TESVPAFITTVMMPFTFSITEGIALGFMSYCIMKVC) constitute an intramembrane region (discontinuously helical). Residues 419–444 (TGRWRDLNLCVVVVAALFALKIILVD) are Cytoplasmic-facing.

This sequence belongs to the nucleobase:cation symporter-2 (NCS2) (TC 2.A.40) family. Azg-like subfamily.

It is found in the cell inner membrane. Its function is as follows. High-affinity transporter for adenine. This chain is Adenine permease AdeQ (adeQ), found in Escherichia coli (strain K12).